The sequence spans 3063 residues: Genome polyprotein (3063 aa).

A Peptidase S30 domain is found at 141 to 284; sequence KLTEGQMNHL…QSILNSMIQF (144 aa). Active-site for P1 proteinase activity residues include His-192, Asp-201, and Ser-235. The short motif at 334–337 is the Involved in interaction with stylet and aphid transmission element; sequence KITC. Residues 592-594 carry the Involved in virions binding and aphid transmission motif; sequence PTK. In terms of domain architecture, Peptidase C6 spans 618 to 740; the sequence is LYIAKQGYCY…ESDIKHYRVG (123 aa). Active-site for helper component proteinase activity residues include Cys-626 and His-699. Positions 1229–1381 constitute a Helicase ATP-binding domain; that stretch reads DIAHSEHLDF…TQQPVKLIVE (153 aa). Residue 1242 to 1249 coordinates ATP; sequence GAVGSGKS. A DECH box motif is present at residues 1331 to 1334; the sequence is DECH. A Helicase C-terminal domain is found at 1400 to 1559; it reads DVVQFGSNVL…NLPVMTGGVS (160 aa). Residues 1884 to 1892 carry the Nuclear localization signal motif; it reads RKKGKGKGT. Tyr-1907 carries the post-translational modification O-(5'-phospho-RNA)-tyrosine. Residues 1949–1964 form an interaction with host EIF4E region; the sequence is KMVENDDIEMQALGSN. The Peptidase C4 domain maps to 2032 to 2250; sequence AKSLMRGLRD…VLWGPLKLKD (219 aa). Residues His-2077, Asp-2112, and Cys-2182 each act as for nuclear inclusion protein A activity in the active site. The region spanning 2519–2643 is the RdRp catalytic domain; it reads WVYCDADGSQ…AVNPEKESIL (125 aa). A disordered region spans residues 2798 to 2841; that stretch reads NDTIDAGGSNKKDAKPEQGSIQPNPNKGKDKDVNAGTSGTHTVP. Residue Thr-3046 is modified to Phosphothreonine.

It belongs to the potyviridae genome polyprotein family. As to quaternary structure, interacts with host eIF4E protein (via cap-binding region); this interaction mediates the translation of the VPg-viral RNA conjugates. Part of a complex that comprises VPg, RNA, host EIF4E and EIF4G; this interaction mediates the translation of the VPg-viral RNA conjugates. Interaction is possible in susceptible hosts but impaired in resistant plants: the VPg of strain LYE84 interacts with tomato eIF4E1 and eIF4E2 as well as with the Capsicum annuum eIF4E1 susceptible allele pvr2(+) but not with resistant alleles pvr2(1), pvr2(2), pvr2(3), pvr2(4), pvr2(5), pvr2(6), pvr2(7), pvr2(8) and pvr2(9), the VPg of strain SON41 interacts with C.annuum eIF4E1 susceptible alleles pvr2(+), pvr2(1), pvr2(2), pvr2(3) and pvr2(4) but not with resistant alleles pvr2(5), pvr2(6), pvr2(7), pvr2(8) and pvr2(9), the VPg of strain LYE90 interacts only with tomato eIF4E1. VPg is uridylylated by the polymerase and is covalently attached to the 5'-end of the genomic RNA. This uridylylated form acts as a nucleotide-peptide primer for the polymerase. In terms of processing, potyviral RNA is expressed as two polyproteins which undergo post-translational proteolytic processing. Genome polyprotein is processed by NIa-pro, P1 and HC-pro proteinases resulting in the production of at least ten individual proteins. P3N-PIPO polyprotein is cleaved by P1 and HC-pro proteinases resulting in the production of three individual proteins. The P1 proteinase and the HC-pro cleave only their respective C-termini autocatalytically. 6K1 is essential for proper proteolytic separation of P3 from CI.

It is found in the host cytoplasmic vesicle. Its subcellular location is the host nucleus. The protein localises to the virion. The enzyme catalyses RNA(n) + a ribonucleoside 5'-triphosphate = RNA(n+1) + diphosphate. The catalysed reaction is Hydrolyzes glutaminyl bonds, and activity is further restricted by preferences for the amino acids in P6 - P1' that vary with the species of potyvirus, e.g. Glu-Xaa-Xaa-Tyr-Xaa-Gln-|-(Ser or Gly) for the enzyme from tobacco etch virus. The natural substrate is the viral polyprotein, but other proteins and oligopeptides containing the appropriate consensus sequence are also cleaved.. It catalyses the reaction Hydrolyzes a Gly-|-Gly bond at its own C-terminus, commonly in the sequence -Tyr-Xaa-Val-Gly-|-Gly, in the processing of the potyviral polyprotein.. Its function is as follows. Required for aphid transmission and also has proteolytic activity. Only cleaves a Gly-Gly dipeptide at its own C-terminus. Interacts with virions and aphid stylets. Acts as a suppressor of RNA-mediated gene silencing, also known as post-transcriptional gene silencing (PTGS), a mechanism of plant viral defense that limits the accumulation of viral RNAs. May have RNA-binding activity. In terms of biological role, has helicase activity. It may be involved in replication. Indispensable for virus replication. Reduces the abundance of host transcripts related to jasmonic acid biosynthesis therefore altering the host defenses. In order to increase its own stability, decreases host protein degradation pathways. Functionally, indispensable for virus replication. Its function is as follows. Mediates the cap-independent, EIF4E-dependent translation of viral genomic RNAs. Binds to the cap-binding site of host EIF4E and thus interferes with the host EIF4E-dependent mRNA export and translation. VPg-RNA directly binds EIF4E and is a template for transcription. Also forms trimeric complexes with EIF4E-EIF4G, which are templates for translation. In terms of biological role, has RNA-binding and proteolytic activities. An RNA-dependent RNA polymerase that plays an essential role in the virus replication. Functionally, involved in aphid transmission, cell-to-cell and systemis movement, encapsidation of the viral RNA and in the regulation of viral RNA amplification. In Potato virus Y (strain N) (PVY), this protein is Genome polyprotein.